Reading from the N-terminus, the 610-residue chain is Phosphoenolpyruvate carboxykinase [GTP] (610 aa).

Substrate-binding positions include arginine 82 and 221–223; that span reads YGG. Residues lysine 230 and histidine 250 each coordinate Mn(2+). Residue serine 272 coordinates substrate. Residue 273 to 278 participates in GTP binding; the sequence is ACGKTN. Residue cysteine 274 is part of the active site. Aspartate 297 lines the Mn(2+) pocket. A substrate-binding site is contributed by 387–389; it reads NSR. Residues arginine 389, arginine 420, and 515-518 each bind GTP; that span reads FGDN.

The protein belongs to the phosphoenolpyruvate carboxykinase [GTP] family. In terms of assembly, monomer. Mn(2+) is required as a cofactor.

The protein localises to the cytoplasm. The catalysed reaction is oxaloacetate + GTP = phosphoenolpyruvate + GDP + CO2. Its pathway is carbohydrate biosynthesis; gluconeogenesis. Involved in the gluconeogenesis. Catalyzes the conversion of oxaloacetate (OAA) to phosphoenolpyruvate (PEP), the rate-limiting step in the metabolic pathway that produces glucose from lactate and other precursors derived from the citric acid cycle. This chain is Phosphoenolpyruvate carboxykinase [GTP], found in Corynebacterium glutamicum (strain ATCC 13032 / DSM 20300 / JCM 1318 / BCRC 11384 / CCUG 27702 / LMG 3730 / NBRC 12168 / NCIMB 10025 / NRRL B-2784 / 534).